A 147-amino-acid chain; its full sequence is MAPGPWPVSCLRGGPLGLTYLSLLLIPAAAGTYCECSLGLSREALIALLVVLAGISASCFCALVIVAIGVLRAKGETCPRQVDNRLVENFGVQEDLMDLHPVYVESQLMDADLEVSLVPPLEDQSLVAIPMEASSEEPPPPPPLPPE.

The signal sequence occupies residues 1–31; that stretch reads MAPGPWPVSCLRGGPLGLTYLSLLLIPAAAG. The Extracellular portion of the chain corresponds to 32-47; it reads TYCECSLGLSREALIA. The helical transmembrane segment at 48 to 68 threads the bilayer; that stretch reads LLVVLAGISASCFCALVIVAI. Residues 69 to 147 lie on the Cytoplasmic side of the membrane; the sequence is GVLRAKGETC…PPPPPPLPPE (79 aa). The tract at residues 128–147 is disordered; the sequence is AIPMEASSEEPPPPPPLPPE. Positions 137 to 147 are enriched in pro residues; that stretch reads EPPPPPPLPPE.

Its subcellular location is the membrane. The protein resides in the cytoplasmic vesicle. The protein localises to the secretory vesicle. It localises to the acrosome. The sequence is that of Transmembrane protein 210 (TMEM210) from Homo sapiens (Human).